The following is a 519-amino-acid chain: Acetylcholine receptor subunit beta-like 2 (519 aa).

An N-terminal signal peptide occupies residues 1-18 (MWHWSLLCVFLLVPLANS). Residues 19 to 244 (TAPISFEANP…ITFKLTMRRK (226 aa)) lie on the Extracellular side of the membrane. An N-linked (GlcNAc...) asparagine glycan is attached at asparagine 50. Cysteine 154 and cysteine 168 are oxidised to a cystine. 3 consecutive transmembrane segments (helical) span residues 245 to 269 (TLFYTVNLIVPCVALTFLTVLVFYL), 277 to 295 (VTLCISILVSLTVFFLLLA), and 311 to 332 (YLLFTMILVSLSVWTTVCVLNI). Topologically, residues 333–462 (HFRSPSTHNM…WKFVSMVLDR (130 aa)) are cytoplasmic. A helical transmembrane segment spans residues 463-481 (FFLWLFTLSCVFGTLAIIC).

The protein belongs to the ligand-gated ion channel (TC 1.A.9) family. Acetylcholine receptor (TC 1.A.9.1) subfamily. In terms of tissue distribution, CNS in embryos.

It is found in the postsynaptic cell membrane. The protein resides in the cell membrane. In terms of biological role, after binding acetylcholine, the AChR responds by an extensive change in conformation that affects all subunits and leads to opening of an ion-conducting channel across the plasma membrane. The sequence is that of Acetylcholine receptor subunit beta-like 2 (nAChRbeta2) from Drosophila melanogaster (Fruit fly).